The chain runs to 559 residues: Formate--tetrahydrofolate ligase (559 aa).

Position 68 to 75 (68 to 75 (TPAGEGKT)) interacts with ATP.

It belongs to the formate--tetrahydrofolate ligase family.

It carries out the reaction (6S)-5,6,7,8-tetrahydrofolate + formate + ATP = (6R)-10-formyltetrahydrofolate + ADP + phosphate. It participates in one-carbon metabolism; tetrahydrofolate interconversion. The sequence is that of Formate--tetrahydrofolate ligase from Rhizobium rhizogenes (strain K84 / ATCC BAA-868) (Agrobacterium radiobacter).